A 113-amino-acid chain; its full sequence is Eukaryotic translation initiation factor 1b (113 aa).

Ser2 carries the N-acetylserine modification. Ser9 is subject to Phosphoserine.

This sequence belongs to the SUI1 family.

Its function is as follows. Probably involved in translation. This is Eukaryotic translation initiation factor 1b (EIF1B) from Homo sapiens (Human).